A 281-amino-acid chain; its full sequence is 3-hydroxyanthranilate 3,4-dioxygenase (281 aa).

The tract at residues 1–162 is domain A (catalytic); it reads MAGVTAIEIP…SNEFKTGKPG (162 aa). Arg-45 provides a ligand contact to O2. The Fe cation site is built by His-49, Glu-55, and His-93. Residue Glu-55 participates in substrate binding. 2 residues coordinate substrate: Arg-97 and Glu-107. The interval 163–179 is linker; it reads KGTFACNAPYEARWTDL. The segment at 180–281 is domain B; it reads PVPINRKEFI…GFAITIRMPG (102 aa).

This sequence belongs to the 3-HAO family. Fe(2+) is required as a cofactor.

Its subcellular location is the cytoplasm. It catalyses the reaction 3-hydroxyanthranilate + O2 = (2Z,4Z)-2-amino-3-carboxymuconate 6-semialdehyde. It functions in the pathway cofactor biosynthesis; NAD(+) biosynthesis; quinolinate from L-kynurenine: step 3/3. Its function is as follows. Catalyzes the oxidative ring opening of 3-hydroxyanthranilate to 2-amino-3-carboxymuconate semialdehyde, which spontaneously cyclizes to quinolinate. This Caenorhabditis briggsae protein is 3-hydroxyanthranilate 3,4-dioxygenase (haao-1).